Reading from the N-terminus, the 464-residue chain is Protein transport protein HofB homolog (464 aa).

Residue 264 to 271 (GPTGSGKS) participates in ATP binding.

Belongs to the GSP E family.

This is Protein transport protein HofB homolog (hofB) from Haemophilus influenzae (strain ATCC 51907 / DSM 11121 / KW20 / Rd).